We begin with the raw amino-acid sequence, 333 residues long: Neuropeptides B/W receptor type 2 (333 aa).

At 1–45 (MQAAGHPEPLDSRGSFSLPTMGANVSQDNGTGHNATFSEPLPFLY) the chain is on the extracellular side. 3 N-linked (GlcNAc...) asparagine glycosylation sites follow: asparagine 24, asparagine 29, and asparagine 34. A helical transmembrane segment spans residues 46–69 (VLLPAVYSGICAVGLTGNTAVILV). Over 70 to 80 (ILRAPKMKTVT) the chain is Cytoplasmic. A helical membrane pass occupies residues 81-105 (NVFILNLAVADGLFTLVLPVNIAEH). Topologically, residues 106-120 (LLQYWPFGELLCKLV) are extracellular. An intrachain disulfide couples cysteine 117 to cysteine 197. The helical transmembrane segment at 121–140 (LAVDHYNIFSSIYFLAVMSV) threads the bilayer. At 141–165 (DRYLVVLATVRSRHMPWRTYRGAKV) the chain is on the cytoplasmic side. Residues 166 to 185 (ASLCVWLGVTVLVLPFFSFA) traverse the membrane as a helical segment. Residues 186–211 (GVYSNELQVPSCGLSFPWPEQVWFKA) are Extracellular-facing. A helical transmembrane segment spans residues 212-233 (SRVYTLVLGFVLPVCTICVLYT). Topologically, residues 234–257 (DLLRRLRAVRLRSGAKALGKARRK) are cytoplasmic. The chain crosses the membrane as a helical span at residues 258–282 (VTVLVLVVLAVCLLCWTPFHLASVV). The Extracellular portion of the chain corresponds to 283–292 (ALTTDLPQTP). A helical transmembrane segment spans residues 293–307 (LVISMSYVITSLSYA). Over 308–333 (NSCLNPFLYAFLDDNFRKNFRSILRC) the chain is Cytoplasmic.

This sequence belongs to the G-protein coupled receptor 1 family. In terms of tissue distribution, detected at high levels in caudate nucleus, hippocampus and amygdala; at moderate levels in the adult brain, thalamus, parietal cortex, pituitary gland, adrenal gland and lymph nodes.

The protein localises to the cell membrane. Functionally, interacts specifically with a number of opioid ligands. Receptor for neuropeptides B and W, which may be involved in neuroendocrine system regulation, food intake and the organization of other signals. The chain is Neuropeptides B/W receptor type 2 (NPBWR2) from Homo sapiens (Human).